A 1241-amino-acid chain; its full sequence is ATP-dependent helicase/nuclease subunit A (1241 aa).

The UvrD-like helicase ATP-binding domain maps to 12–485; that stretch reads SQWTDDQWKA…IDLAKNFRSR (474 aa). Residue 33 to 40 coordinates ATP; that stretch reads AAAGSGKT. Residues 505–805 form the UvrD-like helicase C-terminal domain; the sequence is GEIDYDADAE…RIMTIHKSKG (301 aa).

Belongs to the helicase family. AddA subfamily. As to quaternary structure, heterodimer of AddA and AddB/RexB. Mg(2+) serves as cofactor.

The catalysed reaction is Couples ATP hydrolysis with the unwinding of duplex DNA by translocating in the 3'-5' direction.. It carries out the reaction ATP + H2O = ADP + phosphate + H(+). In terms of biological role, the heterodimer acts as both an ATP-dependent DNA helicase and an ATP-dependent, dual-direction single-stranded exonuclease. Recognizes the chi site generating a DNA molecule suitable for the initiation of homologous recombination. The AddA nuclease domain is required for chi fragment generation; this subunit has the helicase and 3' -&gt; 5' nuclease activities. The polypeptide is ATP-dependent helicase/nuclease subunit A (Bacillus cereus (strain ZK / E33L)).